The chain runs to 1377 residues: Dicer-like protein 2 (1377 aa).

One can recognise a Helicase ATP-binding domain in the interval 23–203; that stretch reads MFEASLQENI…LSMIESNMNA (181 aa). ATP is bound at residue 36–43; it reads MDTGSGKT. The DEAH box motif lies at 144–147; it reads DEAH. Residues 367–544 form the Helicase C-terminal domain; it reads KLEALISFLS…ALALETMAEV (178 aa). Residues 563–657 form the Dicer dsRNA-binding fold domain; that stretch reads AVARLHHFCS…LPLTRKPELR (95 aa). 2 consecutive RNase III domains span residues 916-1056 and 1090-1274; these read ATRL…MDGG and NDSL…VDSR. E1129, D1260, and E1263 together coordinate Mg(2+).

The protein belongs to the helicase family. Dicer subfamily. The cofactor is Mg(2+). It depends on Mn(2+) as a cofactor.

Its function is as follows. Dicer-like endonuclease involved in cleaving double-stranded RNA in the RNA interference (RNAi) pathway. Produces 21 to 25 bp dsRNAs (siRNAs) which target the selective destruction of homologous RNAs leading to sequence-specific suppression of gene expression, called post-transcriptional gene silencing (PTGS). Part of a broad host defense response against viral infection and transposons. The sequence is that of Dicer-like protein 2 (dcl2) from Aspergillus terreus (strain NIH 2624 / FGSC A1156).